Here is a 241-residue protein sequence, read N- to C-terminus: Probable 2-phosphosulfolactate phosphatase (241 aa).

Belongs to the ComB family. Requires Mg(2+) as cofactor.

It carries out the reaction (2R)-O-phospho-3-sulfolactate + H2O = (2R)-3-sulfolactate + phosphate. The polypeptide is Probable 2-phosphosulfolactate phosphatase (Deinococcus geothermalis (strain DSM 11300 / CIP 105573 / AG-3a)).